Consider the following 694-residue polypeptide: MSTLIDNHIEHLSKLSDKKICRILRIKPSKDIDKNDLITKLILDHYYGKPRLGNIIVIKSLQNGGVRNWEFNLEEIDSNNRQLDSTIPWNNDYSLREIQNTLNHRYNNINQDLVDLLSVDDMNNSLNTDFLKKFYTYFYIGNYNRDKLCQTMKTFAKSTKKVTSNGITKNKTVGKGAAGIAFLAETNSGSFEFVIKAMNNVKQYRNKSLDIGTILYKSELPLRSNVKNNHLEYLATDVMRTVELRYPGYSGYNAFISNEGLLYLNSANDNFTNQTIMHIVLNRILTQYDNDHFIYQFDAFFCENRSGLKRGTSTLTNKITLGKTNSTNVKQTDGYNIMEFANAGSLDAILDDWSKSINIDSNYETLLFMFNDIFVQILKTLKILQQPKFAFVHGDLKTKNIFVKTDGQINLPNGQVFPRYIYKIADYDKSSITWNGIRFHNSGNLGTNIIGKLYDNLNTLDLTSTVDSNYYYLTNICPFIESCTSIINGIELESIPIRYLPIPFYSSIDVYSFVTSMLCHKIFHNFVDYCLVRSIDNEITNILKHLFTETDLNIVMDHINNTFNSNKKLDLTKYGKIISIIKNNHIGLRKNINKIYDIYGIKLHMKETRTVVPNIILSADQNICLDKCKLNTCNIIQSTRYNRLSDQCYWKSTNSETQELHISDSDQIDREIDSDEQKQIIDNLFNDIKQQSKK.

Positions 167-548 (ITKNKTVGKG…ITNILKHLFT (382 aa)) constitute a Protein kinase domain. Residues 173-181 (VGKGAAGIA) and K196 each bind ATP. D395 acts as the Proton acceptor in catalysis.

The protein belongs to the protein kinase superfamily. Ser/Thr protein kinase family.

The protein resides in the virion. The catalysed reaction is L-seryl-[protein] + ATP = O-phospho-L-seryl-[protein] + ADP + H(+). The enzyme catalyses L-threonyl-[protein] + ATP = O-phospho-L-threonyl-[protein] + ADP + H(+). The protein is Putative serine/threonine-protein kinase R679 of Acanthamoeba polyphaga (Amoeba).